Consider the following 720-residue polypeptide: MCGIFGYCNFLIEKTRGEIIDTLIEGLQALEYKEYDSSGISIQGDELKSLNIYKQTGKISSLKEEIDLYNLNKNLPFISHCGIAHTRRATHGGLRRANCHPHNSDPSNEFVVVHNGVITNFANLKALLVAKGYVFKSDTDTECIPKLYKHIYDTSIELGYNLDFHVLTNLVLKELEGSYGLLCTSSHFPDEVVAARKGSPLVIGVKGKTDMDVNFVEVEYLDQEEDYLKLNTQTKSSGNVLAAAPVKYNTCLRKSPPLRSQYLRNSTTSTFNHGSSTETPAENGLPRPMEFYLSSDCASLARYVSKVVYLEDNDIAHIYDGELHIHCSKIGSEDFSFRTVQKLELELSKIKKGPYDNFMQKEIYEQCETTKNVMRGRVDAFTNRVVLGGLENWLTELRRAKRIIMIASKSSFHSCLAARPIFEELMEVPVNVELALDFVDRNCCIFRNDVCIFVSRSGETTDTINALNYCIKKEAVTIGVVNCSGSSISRFTHCGVHTNTGPEKGIATTKSYTSQYIALVMIALWMSEDLVSKIERRKEIIQALTIIPSQIKEVLELEPLIIELCDKKLKQHDTFLLLGRGYQFASALEGASKMKEISYVHSESILTDELGHRVLAVASDNPPIIAFATKDAFSPKIASCIDQIIERKGNPIIICNKGHKIWEQDKQKGNVVTLEVPQTVDCLQGILNVIPLQLISYWLAIKKDIGVDLPRDSAMSAPDI.

Residue Cys2 is the Nucleophile; for GATase activity of the active site. The Glutamine amidotransferase type-2 domain maps to 2–321 (CGIFGYCNFL…DNDIAHIYDG (320 aa)). Positions 266 to 280 (STTSTFNHGSSTETP) are enriched in polar residues. The segment at 266–285 (STTSTFNHGSSTETPAENGL) is disordered. SIS domains lie at 393-532 (WLTE…DLVS) and 565-710 (CDKK…VDLP).

The enzyme catalyses D-fructose 6-phosphate + L-glutamine = D-glucosamine 6-phosphate + L-glutamate. Its pathway is nucleotide-sugar biosynthesis; UDP-N-acetyl-alpha-D-glucosamine biosynthesis; alpha-D-glucosamine 6-phosphate from D-fructose 6-phosphate: step 1/1. In terms of biological role, involved in amino sugar synthesis (formation of chitin, supplies the amino sugars of asparagine-linked oligosaccharides of glycoproteins). The sequence is that of Putative glutamine--fructose-6-phosphate aminotransferase [isomerizing] from Saccharomyces cerevisiae (strain RM11-1a) (Baker's yeast).